The following is a 123-amino-acid chain: Small ribosomal subunit protein uS13 (123 aa).

A disordered region spans residues 89–123 (GRRHRSGLPVRGQRTRTNARTRKGKRKAVAKKKAK). Over residues 101-123 (QRTRTNARTRKGKRKAVAKKKAK) the composition is skewed to basic residues.

The protein belongs to the universal ribosomal protein uS13 family. In terms of assembly, part of the 30S ribosomal subunit. Forms a loose heterodimer with protein S19. Forms two bridges to the 50S subunit in the 70S ribosome.

Its function is as follows. Located at the top of the head of the 30S subunit, it contacts several helices of the 16S rRNA. In the 70S ribosome it contacts the 23S rRNA (bridge B1a) and protein L5 of the 50S subunit (bridge B1b), connecting the 2 subunits; these bridges are implicated in subunit movement. Contacts the tRNAs in the A and P-sites. This is Small ribosomal subunit protein uS13 from Cutibacterium acnes (strain DSM 16379 / KPA171202) (Propionibacterium acnes).